Consider the following 331-residue polypeptide: MTTIRDVAKHAKVSVATVSRVLNKKGYVSKEAEEAVLQAIKELNYQPSSVARSLYHKTSGMIGLLIPDISNPFFPELARAVEDVASTYGYTVVLCNTDEEIEKERKYLQALKQKYVDGVILTTSFLPYKEYEQLNIPMVALDRYVNENIPLVASQNKAGARLATEHLLEQGCQFIAHIRGPKGVTPAEDRYEGFKEVVEEQEVANIVVSADFHIDEAQKVTRALLETHPTIDGIFASSDVVAAGAMKAAHMMGKRIPDDLQIVGFDGIPLGNMLVPSLTTVEQPIYDLGAVSTRLLIKQIEKKPLDTYRYEIPTKLVVRETTKGGENSENA.

Residues 1 to 56 form the HTH lacI-type domain; that stretch reads MTTIRDVAKHAKVSVATVSRVLNKKGYVSKEAEEAVLQAIKELNYQPSSVARSLYH. The segment at residues 4–23 is a DNA-binding region (H-T-H motif); the sequence is IRDVAKHAKVSVATVSRVLN.

In terms of biological role, transcriptional repressor for the ribose rbsDACBK operon. This chain is Ribose operon repressor (rbsR), found in Halalkalibacterium halodurans (strain ATCC BAA-125 / DSM 18197 / FERM 7344 / JCM 9153 / C-125) (Bacillus halodurans).